Consider the following 549-residue polypeptide: MGSRNSSSAGSGSLEPSEGLSRRGAGLRRSEEEEEEDEDVDLAQVLAYLLRRGQVRLVQGGGAANLQLIQALSDSEEEHDSAWDGRLGDRYNPPVDATPDTRELEYNEIKTRVELATGRLGLGRTAQEHSFPRMLHQRERGLCHRGSFSLGEQSRVMSHFLPNDLSFTDTYSQKAFCGIYSKDGQIFMSACQDQTIRLYDCRYGRFHKFKSIKARDVGWSVLDVAFTPDGNHFLYSSWSDYIHICSIYGEGDTHTALDLRPDERRFAVFSIAVSSDGREVLGGANDGCLYVFDREQNRRTLQIESHEDDVNAVAFADISSQILFSGGDDAICKVWDRRTMREDDPKPVGALAGHQDGITFIDSKGDARYLISNSKDQTIKLWDIRRFSSREGMEASRLAATQQNWDYRWQQVPKKAWKKLKLPGDSSLMTYRGHGVLHTLIRCRFSPAHSTGQQFIYSGCSTGKVVVYDLLSGHIVKKLTNHKACVRDVSWHPFEEKIVSSSWDGSLRLWQYRQAEYFQDDMTESDRNRVCSSGPAPVPCPSVAFSSPQ.

Positions 1–24 (MGSRNSSSAGSGSLEPSEGLSRRG) are enriched in low complexity. Residues 1-40 (MGSRNSSSAGSGSLEPSEGLSRRGAGLRRSEEEEEEDEDV) are disordered. 2 positions are modified to phosphoserine: S73 and S75. Over residues 80–89 (DSAWDGRLGD) the composition is skewed to basic and acidic residues. Residues 80–100 (DSAWDGRLGDRYNPPVDATPD) are disordered. WD repeat units lie at residues 170 to 210 (TYSQ…HKFK), 216 to 258 (DVGW…TALD), 263 to 302 (ERRFAVFSIAVSSDGREVLGGANDGCLYVFDREQNRRTLQ), 305 to 345 (SHED…EDDP), 353 to 392 (GHQDGITFIDSKGDARYLISNSKDQTIKLWDIRRFSSREG), 435 to 480 (GVLH…KKLT), and 481 to 520 (NHKACVRDVSWHPFEEKIVSSSWDGSLRLWQYRQAEYFQD).

As to quaternary structure, interacts with DDB1 and CUL4A.

The protein operates within protein modification; protein ubiquitination. May function as a substrate receptor for CUL4-DDB1 E3 ubiquitin-protein ligase complex. The sequence is that of DDB1- and CUL4-associated factor 11 (Dcaf11) from Rattus norvegicus (Rat).